The sequence spans 651 residues: Tudor domain-containing protein 3 (651 aa).

One can recognise a UBA domain in the interval 193 to 233 (LVDEKALKHITEMGFSKEASRQALMDNGNNLEAALNVLLTS). Disordered stretches follow at residues 234-271 (NKQK…SAPS), 287-369 (EEPK…VSEV), and 381-450 (YSRY…TSIP). Serine 256 is subject to Phosphoserine. Residues 291–312 (SQPQQLHQGQYRSSNTEQNGVK) are compositionally biased toward polar residues. Over residues 313-338 (DNNHLRHPPRNDTRQPRNEKPPRFQR) the composition is skewed to basic and acidic residues. Serine 345 carries the phosphoserine modification. A Glycyl lysine isopeptide (Lys-Gly) (interchain with G-Cter in SUMO2) cross-link involves residue lysine 470. Positions 555–615 (MWKPGDECFA…KPIQTEAWEE (61 aa)) constitute a Tudor domain. Positions 624-633 (EFRRGGDGQP) are enriched in basic and acidic residues. The disordered stretch occupies residues 624-651 (EFRRGGDGQPRRSTRPTQQFYQPPRARN). The segment at 631–651 (GQPRRSTRPTQQFYQPPRARN) is EBM motif; may mediate interaction with the EJC.

In terms of assembly, component of mRNA stress granules. Interacts with FMR1, FXR1, FXR2, EWSR1, FUS, SERBP1, EEF1A1 and DDX3X or DDX3Y, and with the small nuclear ribonucleoprotein-associated proteins SNRPB and SNRPN. Interacts with 'Lys-48'-linked tetra-ubiquitin, but not with monoubiquitin or 'Lys-63'-linked ubiquitin chains. May interact with the exon junction complex (EJC) composed at least of CASC3, EIF4A3, MAGOH and RBM8A. Interacts with POLR2A (via the C-terminal domain (CTD)). In terms of processing, probably cleaved by enteroviral 2A proteinase. As to expression, detected in heart, brain, placenta, lung, liver, skeletal muscle, kidney and pancreas.

It localises to the cytoplasm. The protein resides in the nucleus. Scaffolding protein that specifically recognizes and binds dimethylarginine-containing proteins. Plays a role in the regulation of translation of target mRNAs by binding Arg/Gly-rich motifs (GAR) in dimethylarginine-containing proteins. In nucleus, acts as a coactivator: recognizes and binds asymmetric dimethylation on the core histone tails associated with transcriptional activation (H3R17me2a and H4R3me2a) and recruits proteins at these arginine-methylated loci. In cytoplasm, acts as an antiviral factor that participates in the assembly of stress granules together with G3BP1. The polypeptide is Tudor domain-containing protein 3 (TDRD3) (Homo sapiens (Human)).